The sequence spans 583 residues: Aspartate--tRNA ligase (583 aa).

Glu-169 is an L-aspartate binding site. The segment at Gln-193–Lys-196 is aspartate. Arg-215 serves as a coordination point for L-aspartate. Residues Arg-215–Glu-217 and Gln-224 each bind ATP. Residue His-443 participates in L-aspartate binding. Glu-477 serves as a coordination point for ATP. Arg-484 contributes to the L-aspartate binding site. Gly-529–Arg-532 serves as a coordination point for ATP.

It belongs to the class-II aminoacyl-tRNA synthetase family. Type 1 subfamily. As to quaternary structure, homodimer.

The protein resides in the cytoplasm. It catalyses the reaction tRNA(Asp) + L-aspartate + ATP = L-aspartyl-tRNA(Asp) + AMP + diphosphate. In terms of biological role, catalyzes the attachment of L-aspartate to tRNA(Asp) in a two-step reaction: L-aspartate is first activated by ATP to form Asp-AMP and then transferred to the acceptor end of tRNA(Asp). The polypeptide is Aspartate--tRNA ligase (Stenotrophomonas maltophilia (strain R551-3)).